The following is a 47-amino-acid chain: IgA-inducing protein (47 aa).

The signal sequence occupies residues 1 to 24 (MKKRSVSGCNITILAVVFSHLSAG).

As to expression, expressed in Peyer patches, spleen, thymus, liver and mesenteric lymph node. Expressed at high levels by dendritic cells, and at lower levels by T-cells, monocytes and B-cells.

Its subcellular location is the secreted. In terms of biological role, enhances IgA secretion from B-cells stimulated via CD40. In Bos taurus (Bovine), this protein is IgA-inducing protein (IGIP).